A 95-amino-acid polypeptide reads, in one-letter code: MSVDLATVKRVAKLARIALPEDEAERVMGELNGILGFVEQLSEVNVDGVEPMTSVMPMAMRKRKDAVTDGGKADDIVANAPETDRHFFLVPKVVE.

Belongs to the GatC family. In terms of assembly, heterotrimer of A, B and C subunits.

The catalysed reaction is L-glutamyl-tRNA(Gln) + L-glutamine + ATP + H2O = L-glutaminyl-tRNA(Gln) + L-glutamate + ADP + phosphate + H(+). The enzyme catalyses L-aspartyl-tRNA(Asn) + L-glutamine + ATP + H2O = L-asparaginyl-tRNA(Asn) + L-glutamate + ADP + phosphate + 2 H(+). In terms of biological role, allows the formation of correctly charged Asn-tRNA(Asn) or Gln-tRNA(Gln) through the transamidation of misacylated Asp-tRNA(Asn) or Glu-tRNA(Gln) in organisms which lack either or both of asparaginyl-tRNA or glutaminyl-tRNA synthetases. The reaction takes place in the presence of glutamine and ATP through an activated phospho-Asp-tRNA(Asn) or phospho-Glu-tRNA(Gln). This Allorhizobium ampelinum (strain ATCC BAA-846 / DSM 112012 / S4) (Agrobacterium vitis (strain S4)) protein is Aspartyl/glutamyl-tRNA(Asn/Gln) amidotransferase subunit C.